The sequence spans 236 residues: MKMMDANEIISFIQNSKKSTPVKVYVKGDLEGIDFGASAKPFITGNTGVVFGEWAEIQAALEANKGKIEDYVIENDRRNSAIPTLDLKNIKARIEPGAIIRDQVEIGDNAVIMMGASINIGSVIGEGTMIDMNVVLGGRATVGKNCHIGAGSVLAGVIEPPSAKPVVIEDDVVIGANAVVLEGVTVGKGAVVAAGAIVVEDVEPYTVVAGTPAKKIKDIDEKTKGKTEIKQELRQL.

It belongs to the transferase hexapeptide repeat family. DapH subfamily.

It carries out the reaction (S)-2,3,4,5-tetrahydrodipicolinate + acetyl-CoA + H2O = L-2-acetamido-6-oxoheptanedioate + CoA. The protein operates within amino-acid biosynthesis; L-lysine biosynthesis via DAP pathway; LL-2,6-diaminopimelate from (S)-tetrahydrodipicolinate (acetylase route): step 1/3. Its function is as follows. Catalyzes the transfer of an acetyl group from acetyl-CoA to tetrahydrodipicolinate. The protein is 2,3,4,5-tetrahydropyridine-2,6-dicarboxylate N-acetyltransferase of Bacillus licheniformis (strain ATCC 14580 / DSM 13 / JCM 2505 / CCUG 7422 / NBRC 12200 / NCIMB 9375 / NCTC 10341 / NRRL NRS-1264 / Gibson 46).